An 887-amino-acid polypeptide reads, in one-letter code: Alanine--tRNA ligase (887 aa).

Over residues 425–441 (MQEQKSRARSDRREKQQ) the composition is skewed to basic and acidic residues. The segment at 425 to 448 (MQEQKSRARSDRREKQQTGDGAGS) is disordered. Positions 569, 573, 672, and 676 each coordinate Zn(2+).

This sequence belongs to the class-II aminoacyl-tRNA synthetase family. It depends on Zn(2+) as a cofactor.

It localises to the cytoplasm. The enzyme catalyses tRNA(Ala) + L-alanine + ATP = L-alanyl-tRNA(Ala) + AMP + diphosphate. In terms of biological role, catalyzes the attachment of alanine to tRNA(Ala) in a two-step reaction: alanine is first activated by ATP to form Ala-AMP and then transferred to the acceptor end of tRNA(Ala). Also edits incorrectly charged Ser-tRNA(Ala) and Gly-tRNA(Ala) via its editing domain. This Chlorobium luteolum (strain DSM 273 / BCRC 81028 / 2530) (Pelodictyon luteolum) protein is Alanine--tRNA ligase.